The primary structure comprises 287 residues: Ribosomal RNA-processing protein 8 (287 aa).

The segment at 1–62 is disordered; that stretch reads MTTEENKTSR…SAPSKRPKPS (62 aa). A compositionally biased stretch (basic residues) spans 9-21; it reads SRNRKRKRQRNPK. The span at 35-46 shows a compositional bias: basic and acidic residues; the sequence is QNEKKNQRDTKN. 6 residues coordinate S-adenosyl-L-methionine: histidine 107, glycine 142, aspartate 160, aspartate 172, methionine 173, and cysteine 189.

Belongs to the methyltransferase superfamily. RRP8 family.

The protein localises to the nucleus. It localises to the nucleolus. Probable methyltransferase required to silence rDNA. The chain is Ribosomal RNA-processing protein 8 from Arabidopsis thaliana (Mouse-ear cress).